A 464-amino-acid polypeptide reads, in one-letter code: Methionine aminopeptidase 2-2 (464 aa).

The interval 1 to 106 (MGAKTYEGGD…PRVPLSQLFP (106 aa)) is disordered. Residues 37-53 (EDGDGEFGSDDDDDGGD) show a composition bias toward acidic residues. Basic residues predominate over residues 70–86 (PKKKKRSKKKKNNKKKS). Histidine 216 is a substrate binding site. Aspartate 237, aspartate 248, and histidine 317 together coordinate a divalent metal cation. Histidine 325 contributes to the substrate binding site. A divalent metal cation-binding residues include glutamate 350 and glutamate 445.

The protein belongs to the peptidase M24A family. Methionine aminopeptidase eukaryotic type 2 subfamily. Co(2+) is required as a cofactor. It depends on Zn(2+) as a cofactor. Requires Mn(2+) as cofactor. Fe(2+) serves as cofactor.

The protein localises to the cytoplasm. It carries out the reaction Release of N-terminal amino acids, preferentially methionine, from peptides and arylamides.. Its function is as follows. Cotranslationally removes the N-terminal methionine from nascent proteins. The N-terminal methionine is often cleaved when the second residue in the primary sequence is small and uncharged (Met-Ala-, Cys, Gly, Pro, Ser, Thr, or Val). In Talaromyces stipitatus (strain ATCC 10500 / CBS 375.48 / QM 6759 / NRRL 1006) (Penicillium stipitatum), this protein is Methionine aminopeptidase 2-2.